The following is a 365-amino-acid chain: Cobalt-precorrin-5B C(1)-methyltransferase (365 aa).

Belongs to the CbiD family.

The catalysed reaction is Co-precorrin-5B + S-adenosyl-L-methionine = Co-precorrin-6A + S-adenosyl-L-homocysteine. It participates in cofactor biosynthesis; adenosylcobalamin biosynthesis; cob(II)yrinate a,c-diamide from sirohydrochlorin (anaerobic route): step 6/10. Its function is as follows. Catalyzes the methylation of C-1 in cobalt-precorrin-5B to form cobalt-precorrin-6A. In Methanococcus maripaludis (strain DSM 14266 / JCM 13030 / NBRC 101832 / S2 / LL), this protein is Cobalt-precorrin-5B C(1)-methyltransferase.